The chain runs to 963 residues: Iron-responsive element-binding protein 2 (963 aa).

The [4Fe-4S] cluster site is built by C512, C578, and C581.

This sequence belongs to the aconitase/IPM isomerase family. Interacts with RBCK1 isoform 1 and isoform 2 only in iron-rich conditions. Interacts (when associated with the 4Fe-4S) with FBXL5. Interacts with CIAO1 and CIAO2A. [4Fe-4S] cluster serves as cofactor. In terms of processing, ubiquitinated and degraded by the proteasome in presence of high level of iron and oxygen. Ubiquitinated by a SCF complex containing FBXL5. Upon iron and oxygen depletion FBXL5 is degraded, preventing ubiquitination and allowing its RNA-binding activity.

The protein resides in the cytoplasm. In terms of biological role, RNA-binding protein that binds to iron-responsive elements (IRES), which are stem-loop structures found in the 5'-UTR of ferritin, and delta aminolevulinic acid synthase mRNAs, and in the 3'-UTR of transferrin receptor mRNA. Binding to the IRE element in ferritin results in the repression of its mRNA translation. Binding of the protein to the transferrin receptor mRNA inhibits the degradation of this otherwise rapidly degraded mRNA. The sequence is that of Iron-responsive element-binding protein 2 (IREB2) from Homo sapiens (Human).